Reading from the N-terminus, the 401-residue chain is Argininosuccinate synthase (401 aa).

9 to 17 (AYSGGLDTS) lines the ATP pocket. Y86 contacts L-citrulline. G116 is a binding site for ATP. L-aspartate is bound by residues T118, N122, and D123. N122 serves as a coordination point for L-citrulline. The L-citrulline site is built by R126, S174, S183, E259, and Y271.

This sequence belongs to the argininosuccinate synthase family. Type 1 subfamily. Homotetramer.

It localises to the cytoplasm. It carries out the reaction L-citrulline + L-aspartate + ATP = 2-(N(omega)-L-arginino)succinate + AMP + diphosphate + H(+). The protein operates within amino-acid biosynthesis; L-arginine biosynthesis; L-arginine from L-ornithine and carbamoyl phosphate: step 2/3. This is Argininosuccinate synthase from Bacillus thuringiensis subsp. konkukian (strain 97-27).